Reading from the N-terminus, the 103-residue chain is G0/G1 switch protein 2 (103 aa).

Directly interacts with BCL2; this interaction prevents the formation of the anti-apoptotic BAX-BCL2 complex.

The protein localises to the mitochondrion. Its function is as follows. Promotes apoptosis by binding to BCL2, hence preventing the formation of protective BCL2-BAX heterodimers. The sequence is that of G0/G1 switch protein 2 (G0s2) from Rattus norvegicus (Rat).